Here is a 233-residue protein sequence, read N- to C-terminus: Apoptosis regulator Bcl-2 (233 aa).

A BH4 motif is present at residues 10 to 30 (DNREIVLKYIHYKLSQRGYDW). The tract at residues 32–86 (AGEDRPPVPPAPAPAAAPAAVAAAGASSHHRPEPPGSAAASEVPPAEGLRPAPPG) is disordered. Positions 87-101 (VHLALRQAGDEFSRR) match the BH3 motif. Residues 130–149 (ELFRDGVNWGRIVAFFEFGG) carry the BH1 motif. The short motif at 181–196 (NWIQDNGGWDAFVELY) is the BH2 element. Residues 208 to 228 (WISLKTILSLVLVGACITLGA) form a helical membrane-spanning segment.

This sequence belongs to the Bcl-2 family. Forms homodimers, and heterodimers with BAX, BAD, BAK and Bcl-X(L). Heterodimerization with BAX requires intact BH1 and BH2 motifs, and is necessary for anti-apoptotic activity. Also interacts with APAF1 and RAF-1. In adult chicken expressed, in thymus, spleen, kidney, heart, ovary and brain, with the highest levels in the thymus. In the embryo, highly levels expressed in all tissues with high levels in the bursa of Fabricius.

It is found in the mitochondrion outer membrane. It localises to the nucleus membrane. The protein localises to the endoplasmic reticulum membrane. The protein resides in the cytoplasm. Its function is as follows. Suppresses apoptosis in a variety of cell systems including factor-dependent lymphohematopoietic and neural cells. Regulates cell death by controlling the mitochondrial membrane permeability. Appears to function in a feedback loop system with caspases. Inhibits caspase activity either by preventing the release of cytochrome c from the mitochondria and/or by binding to the apoptosis-activating factor (APAF-1). In Gallus gallus (Chicken), this protein is Apoptosis regulator Bcl-2 (BCL2).